A 300-amino-acid chain; its full sequence is Protease HtpX homolog (300 aa).

2 helical membrane passes run 7–24 (GILM…GALI) and 29–46 (GAII…FTFW). His130 is a binding site for Zn(2+). Residue Glu131 is part of the active site. His134 is a Zn(2+) binding site. 2 helical membrane-spanning segments follow: residues 145 to 165 (VTAT…FFGG) and 174 to 194 (PMGL…AGLV). Glu203 is a binding site for Zn(2+).

Belongs to the peptidase M48B family. Zn(2+) is required as a cofactor.

The protein resides in the cell inner membrane. This is Protease HtpX homolog from Cereibacter sphaeroides (strain ATCC 17029 / ATH 2.4.9) (Rhodobacter sphaeroides).